An 833-amino-acid polypeptide reads, in one-letter code: Multiphosphoryl transfer protein 2 (833 aa).

Residues 2–91 (ALIVEFICEL…QWLRDEFPHC (90 aa)) enclose the HPr domain. Histidine 16 serves as the catalytic Tele-phosphohistidine intermediate; for HPr activity. Phosphohistidine; by EI is present on histidine 16. The segment at 143–653 (LGNLPAAKGV…AAKARMAQLD (511 aa)) is PTS EI. Histidine 301 serves as the catalytic Tele-phosphohistidine intermediate; for PTS EI activity. Histidine 301 carries the phosphohistidine; by autocatalysis modification. Positions 408 and 444 each coordinate phosphoenolpyruvate. The Mg(2+) site is built by glutamate 543 and aspartate 567. Residues 566–567 (ND) and arginine 577 contribute to the phosphoenolpyruvate site. Cysteine 614 acts as the Proton donor; for EI activity in catalysis. The PTS EIIA type-2 domain occupies 688–830 (PLVTAECITL…DAIASLLQHE (143 aa)). Histidine 750 (tele-phosphohistidine intermediate; for PTS EIIA activity) is an active-site residue. The residue at position 750 (histidine 750) is a Phosphohistidine; by HPr.

The protein belongs to the PEP-utilizing enzyme family. It depends on Mg(2+) as a cofactor.

The protein localises to the cytoplasm. The catalysed reaction is L-histidyl-[protein] + phosphoenolpyruvate = N(pros)-phospho-L-histidyl-[protein] + pyruvate. The enzyme catalyses D-fructose(out) + N(pros)-phospho-L-histidyl-[protein] = D-fructose 1-phosphate(in) + L-histidyl-[protein]. Its function is as follows. Multifunctional protein that includes general (non sugar-specific) and sugar-specific components of the phosphoenolpyruvate-dependent sugar phosphotransferase system (sugar PTS). This major carbohydrate active transport system catalyzes the phosphorylation of incoming sugar substrates concomitantly with their translocation across the cell membrane. The enzyme II FrwABC PTS system is involved in fructose transport. This chain is Multiphosphoryl transfer protein 2, found in Escherichia coli (strain K12).